Here is a 110-residue protein sequence, read N- to C-terminus: Iron-sulfur cluster assembly protein CyaY (110 aa).

This sequence belongs to the frataxin family.

Functionally, involved in iron-sulfur (Fe-S) cluster assembly. May act as a regulator of Fe-S biogenesis. The protein is Iron-sulfur cluster assembly protein CyaY of Pseudomonas syringae pv. syringae (strain B728a).